We begin with the raw amino-acid sequence, 395 residues long: Dihydroorotate dehydrogenase (quinone), mitochondrial (395 aa).

A mitochondrion; not cleaved-targeting transit peptide spans 1–10 (MAWRHLKKRA). The Mitochondrial matrix segment spans residues 1-10 (MAWRHLKKRA). The helical transmembrane segment at 11 to 30 (QDAVIILGGGGLLFASYLMA) threads the bilayer. Residues 31 to 395 (TGDERFYAEH…TDAIGADHRR (365 aa)) are Mitochondrial intermembrane-facing. Residues 95–99 (AGFDK) and S119 each bind FMN. K99 is a binding site for substrate. 144-148 (NRYGF) is a substrate binding site. The FMN site is built by N180 and N211. 211–216 (NVSSPN) contributes to the substrate binding site. The Nucleophile role is filled by S214. The FMN site is built by K254 and T282. A substrate-binding site is contributed by 283–284 (NT). Residues G305, G334, and 355–356 (YT) contribute to the FMN site.

It belongs to the dihydroorotate dehydrogenase family. Type 2 subfamily. In terms of assembly, monomer. Requires FMN as cofactor. The uncleaved transit peptide is required for mitochondrial targeting and proper membrane integration.

The protein localises to the mitochondrion inner membrane. The catalysed reaction is (S)-dihydroorotate + a quinone = orotate + a quinol. The protein operates within pyrimidine metabolism; UMP biosynthesis via de novo pathway; orotate from (S)-dihydroorotate (quinone route): step 1/1. In terms of biological role, catalyzes the conversion of dihydroorotate to orotate with quinone as electron acceptor. Required for UMP biosynthesis via de novo pathway. In Homo sapiens (Human), this protein is Dihydroorotate dehydrogenase (quinone), mitochondrial (DHODH).